The following is a 177-amino-acid chain: MIIAVTGTPGVGKTTVSKLLAEKLGYEYVSLRDYAIEKGIGEMKGDELEVEVDELTYNFERDFKGKNVVVDGHLSHFLNADLVVVLRAHPRLIGERLTERGYSREKVGENVEAELVDVILVEALEENENVIEVDTTGKTPEEVVNEILELIEKGVKKRVGVVDWSEVYDEVIPYLRL.

Gly-10, Gly-12, Lys-13, Thr-14, and Thr-15 together coordinate ATP. The segment at 30 to 50 (SLRDYAIEKGIGEMKGDELEV) is NMP. Residues 99-109 (ERGYSREKVGE) are LID. ATP contacts are provided by Arg-100 and Lys-138.

It belongs to the adenylate kinase family. AK6 subfamily. As to quaternary structure, interacts with uS11. Not a structural component of 40S pre-ribosomes, but transiently interacts with them by binding to uS11.

The catalysed reaction is AMP + ATP = 2 ADP. It catalyses the reaction ATP + H2O = ADP + phosphate + H(+). In terms of biological role, broad-specificity nucleoside monophosphate (NMP) kinase that catalyzes the reversible transfer of the terminal phosphate group between nucleoside triphosphates and monophosphates. Also has ATPase activity. Involved in the late maturation steps of the 30S ribosomal particles, specifically 16S rRNA maturation. While NMP activity is not required for ribosome maturation, ATPase activity is. Associates transiently with small ribosomal subunit protein uS11. ATP hydrolysis breaks the interaction with uS11. May temporarily remove uS11 from the ribosome to enable a conformational change of the ribosomal RNA that is needed for the final maturation step of the small ribosomal subunit. This Thermococcus gammatolerans (strain DSM 15229 / JCM 11827 / EJ3) protein is Putative adenylate kinase.